Consider the following 392-residue polypeptide: MENRIEMSQLRASKKDSKISYVLLMATKLYLESGQPVGSKLLEETYCSDLSSATIRNYFAQLETNGFLRKNHISGGRIPTDLAFRYYADHNAPFLEQEEILAIQQKLTELPEYSKNIVKDLQKASEVLSDILQLPVCFSSPRFESDSVINIQLVAIDDQRVVFVLSTEFGQVFTDVLWLPEQLPENSLKRIEGFLQNYLRKQPSDSLLSQKEEDLGMVLYNEVVVRYLTRYCHFSEEDLYQTGLSRLLKYETFKDPETLAQGLAFFENRKHMCQLLNTYLHKETPTAFIGRELTDIVGNTDPSCAVITIPYYMDRTPLGAFGVLGPMNLPYQQVFGTLSLFTERLKVILTQSFYKFKLSFRRPCPTDPRCSQRPAELTRSSSIKLLPAKELS.

Belongs to the HrcA family.

Its function is as follows. Negative regulator of class I heat shock genes (grpE-dnaK-dnaJ and groELS operons). Prevents heat-shock induction of these operons. The chain is Heat-inducible transcription repressor HrcA from Chlamydia trachomatis serovar L2 (strain ATCC VR-902B / DSM 19102 / 434/Bu).